The chain runs to 456 residues: Exodeoxyribonuclease 7 large subunit (456 aa).

It belongs to the XseA family. Heterooligomer composed of large and small subunits.

Its subcellular location is the cytoplasm. It carries out the reaction Exonucleolytic cleavage in either 5'- to 3'- or 3'- to 5'-direction to yield nucleoside 5'-phosphates.. In terms of biological role, bidirectionally degrades single-stranded DNA into large acid-insoluble oligonucleotides, which are then degraded further into small acid-soluble oligonucleotides. This chain is Exodeoxyribonuclease 7 large subunit, found in Shigella dysenteriae serotype 1 (strain Sd197).